The sequence spans 320 residues: 3-hydroxybenzoate 6-hydroxylase 2 (320 aa).

The interval methionine 1–threonine 25 is disordered. The segment covering arginine 16–threonine 25 has biased composition (polar residues).

This sequence belongs to the 3-hydroxybenzoate 6-hydroxylase family. Requires FAD as cofactor.

It carries out the reaction 3-hydroxybenzoate + NADH + O2 + H(+) = 2,5-dihydroxybenzoate + NAD(+) + H2O. Catalyzes the conversion of 3-hydroxybenzoate to gentisate. This chain is 3-hydroxybenzoate 6-hydroxylase 2 (hbzD), found in Aquipseudomonas alcaligenes (Pseudomonas alcaligenes).